The primary structure comprises 371 residues: tRNA 2-selenouridine synthase (371 aa).

The 124-residue stretch at 14-137 (FLDDVPLIDL…MRRFLIDTLD (124 aa)) folds into the Rhodanese domain. C97 acts as the S-selanylcysteine intermediate in catalysis.

It belongs to the SelU family. As to quaternary structure, monomer.

It carries out the reaction 5-methylaminomethyl-2-thiouridine(34) in tRNA + selenophosphate + (2E)-geranyl diphosphate + H2O + H(+) = 5-methylaminomethyl-2-selenouridine(34) in tRNA + (2E)-thiogeraniol + phosphate + diphosphate. The enzyme catalyses 5-methylaminomethyl-2-thiouridine(34) in tRNA + (2E)-geranyl diphosphate = 5-methylaminomethyl-S-(2E)-geranyl-thiouridine(34) in tRNA + diphosphate. It catalyses the reaction 5-methylaminomethyl-S-(2E)-geranyl-thiouridine(34) in tRNA + selenophosphate + H(+) = 5-methylaminomethyl-2-(Se-phospho)selenouridine(34) in tRNA + (2E)-thiogeraniol. The catalysed reaction is 5-methylaminomethyl-2-(Se-phospho)selenouridine(34) in tRNA + H2O = 5-methylaminomethyl-2-selenouridine(34) in tRNA + phosphate. Involved in the post-transcriptional modification of the uridine at the wobble position (U34) of tRNA(Lys), tRNA(Glu) and tRNA(Gln). Catalyzes the conversion of 2-thiouridine (S2U-RNA) to 2-selenouridine (Se2U-RNA). Acts in a two-step process involving geranylation of 2-thiouridine (S2U) to S-geranyl-2-thiouridine (geS2U) and subsequent selenation of the latter derivative to 2-selenouridine (Se2U) in the tRNA chain. In Aeromonas salmonicida (strain A449), this protein is tRNA 2-selenouridine synthase.